Consider the following 92-residue polypeptide: Putative regulatory protein CTN_0877 (92 aa).

Belongs to the RemA family.

The protein is Putative regulatory protein CTN_0877 of Thermotoga neapolitana (strain ATCC 49049 / DSM 4359 / NBRC 107923 / NS-E).